Consider the following 596-residue polypeptide: Elongation factor 4 (596 aa).

The 182-residue stretch at 2-183 (NNIRNFSIIA…TIIRKIPPPK (182 aa)) folds into the tr-type G domain. GTP-binding positions include 14–19 (DHGKST) and 130–133 (NKID).

The protein belongs to the TRAFAC class translation factor GTPase superfamily. Classic translation factor GTPase family. LepA subfamily.

It localises to the cell inner membrane. The enzyme catalyses GTP + H2O = GDP + phosphate + H(+). In terms of biological role, required for accurate and efficient protein synthesis under certain stress conditions. May act as a fidelity factor of the translation reaction, by catalyzing a one-codon backward translocation of tRNAs on improperly translocated ribosomes. Back-translocation proceeds from a post-translocation (POST) complex to a pre-translocation (PRE) complex, thus giving elongation factor G a second chance to translocate the tRNAs correctly. Binds to ribosomes in a GTP-dependent manner. The polypeptide is Elongation factor 4 (Campylobacter fetus subsp. fetus (strain 82-40)).